The following is a 1006-amino-acid chain: Pentatricopeptide repeat-containing protein At1g30610, chloroplastic (1006 aa).

The transit peptide at M1–R40 directs the protein to the chloroplast. 2 disordered regions span residues L180–S219 and S248–G292. Basic and acidic residues predominate over residues E194–S219. The span at W254–T263 shows a compositional bias: polar residues. The span at P265 to D284 shows a compositional bias: basic and acidic residues. PPR repeat units follow at residues T468 to K502, I506 to Q536, D542 to P572, D592 to P626, S627 to S657, N661 to G695, L759 to V789, N793 to I827, D840 to F874, and N875 to P909.

This sequence belongs to the PPR family. P subfamily.

It is found in the plastid. The protein resides in the chloroplast. Functionally, may play a role in embryogenesis. The sequence is that of Pentatricopeptide repeat-containing protein At1g30610, chloroplastic (EMB2279) from Arabidopsis thaliana (Mouse-ear cress).